The sequence spans 410 residues: Peptidase T (410 aa).

Residue H77 coordinates Zn(2+). D79 is a catalytic residue. A Zn(2+)-binding site is contributed by D140. The Proton acceptor role is filled by E174. Zn(2+) is bound by residues E175, D197, and H379.

It belongs to the peptidase M20B family. It depends on Zn(2+) as a cofactor.

The protein resides in the cytoplasm. It catalyses the reaction Release of the N-terminal residue from a tripeptide.. Functionally, cleaves the N-terminal amino acid of tripeptides. The sequence is that of Peptidase T from Desulfitobacterium hafniense (strain Y51).